The following is a 103-amino-acid chain: Small ribosomal subunit protein uS10 (103 aa).

It belongs to the universal ribosomal protein uS10 family. In terms of assembly, part of the 30S ribosomal subunit.

Involved in the binding of tRNA to the ribosomes. In Blochmanniella pennsylvanica (strain BPEN), this protein is Small ribosomal subunit protein uS10.